We begin with the raw amino-acid sequence, 96 residues long: Signal recognition particle 19 kDa protein (96 aa).

The protein belongs to the SRP19 family. In terms of assembly, part of the signal recognition particle protein translocation system, which is composed of SRP and FtsY. Archaeal SRP consists of a 7S RNA molecule of 300 nucleotides and two protein subunits: SRP54 and SRP19.

It localises to the cytoplasm. In terms of biological role, involved in targeting and insertion of nascent membrane proteins into the cytoplasmic membrane. Binds directly to 7S RNA and mediates binding of the 54 kDa subunit of the SRP. The chain is Signal recognition particle 19 kDa protein from Pyrobaculum arsenaticum (strain DSM 13514 / JCM 11321 / PZ6).